The sequence spans 1021 residues: INO80 complex subunit D (1021 aa).

Residue lysine 87 forms a Glycyl lysine isopeptide (Lys-Gly) (interchain with G-Cter in SUMO2) linkage. Serine 132 is subject to Phosphoserine. 5 disordered regions span residues 194 to 239, 514 to 570, 808 to 844, 911 to 940, and 976 to 1021; these read FSTP…PMQG, RGDN…SMPT, RQQY…PHTS, SLST…SVLP, and QLSS…PSPN. Polar residues predominate over residues 224–239; the sequence is VCKSPQPQNTSLPMQG. The span at 520 to 554 shows a compositional bias: basic residues; sequence KVQHQQQRKPRKKTKPPALTKKHKKKRRRGPRRPQ. The segment covering 911 to 926 has biased composition (low complexity); that stretch reads SLSTPPTTSNSETTQP. Positions 931-940 are enriched in polar residues; sequence VTPSSSSVLP. A compositionally biased stretch (low complexity) spans 995-1014; sequence APPTGFTATGATATSTNNAS.

It belongs to the INO80D family. As to quaternary structure, component of the chromatin remodeling INO80 complex; specifically part of a complex module associated with the N-terminus of INO80.

The protein localises to the nucleus. Putative regulatory component of the chromatin remodeling INO80 complex which is involved in transcriptional regulation, DNA replication and probably DNA repair. The chain is INO80 complex subunit D from Mus musculus (Mouse).